An 878-amino-acid chain; its full sequence is von Willebrand factor A domain-containing protein DDB_G0267758 (878 aa).

The 134-residue stretch at 36–169 (GLFLTENNKK…TVKITLTITS (134 aa)) folds into the VIT domain. In terms of domain architecture, VWFA spans 316–496 (EFIFLIDCSG…ISLKPMFSNI (181 aa)). Residues 595 to 623 (SSSSSSSSSSSSSSSSSSSSSSSSSSSSS) are compositionally biased toward low complexity. Disordered stretches follow at residues 595–638 (SSSS…HRLS) and 752–774 (SVKKSKKSETKEETTKTTSSKTK). Residues 624–635 (TTTATTNQNQIH) are compositionally biased toward polar residues.

In Dictyostelium discoideum (Social amoeba), this protein is von Willebrand factor A domain-containing protein DDB_G0267758.